A 406-amino-acid chain; its full sequence is Phosphopentomutase (406 aa).

D10, D305, H310, D346, H347, and H358 together coordinate Mn(2+).

It belongs to the phosphopentomutase family. Mn(2+) is required as a cofactor.

The protein localises to the cytoplasm. It catalyses the reaction 2-deoxy-alpha-D-ribose 1-phosphate = 2-deoxy-D-ribose 5-phosphate. It carries out the reaction alpha-D-ribose 1-phosphate = D-ribose 5-phosphate. It functions in the pathway carbohydrate degradation; 2-deoxy-D-ribose 1-phosphate degradation; D-glyceraldehyde 3-phosphate and acetaldehyde from 2-deoxy-alpha-D-ribose 1-phosphate: step 1/2. Its function is as follows. Isomerase that catalyzes the conversion of deoxy-ribose 1-phosphate (dRib-1-P) and ribose 1-phosphate (Rib-1-P) to deoxy-ribose 5-phosphate (dRib-5-P) and ribose 5-phosphate (Rib-5-P), respectively. In Rhizobium rhizogenes (strain K84 / ATCC BAA-868) (Agrobacterium radiobacter), this protein is Phosphopentomutase.